The following is a 956-amino-acid chain: Ubiquitin carboxyl-terminal hydrolase CYLD (956 aa).

The interaction with TRIP stretch occupies residues 106-593; that stretch reads CEERFSLFKN…LEIMIGKKKG (488 aa). 2 CAP-Gly domains span residues 153–198 and 253–286; these read LAER…VFVA and DVLPGKESLGYFVGVDMDNPIGNWDGRFDGVQLC. The interval 309–353 is disordered; the sequence is SVTQERRPPKLAFMSRGVGDKGSSSHNKPKATGSTSDPGNRNRSE. A compositionally biased stretch (polar residues) spans 330–349; that stretch reads GSSSHNKPKATGSTSDPGNR. At serine 387 the chain carries Phosphoserine. A disordered region spans residues 392–411; the sequence is STDFDRSSPPLQPPPVNSLT. The segment at 394–469 is interaction with TRAF2; that stretch reads DFDRSSPPLQ…LAMPPGNSHG (76 aa). Phosphoserine occurs at positions 418 and 422. The tract at residues 470-554 is interaction with IKBKG/NEMO; the sequence is LEVGSLAEVK…FASLQPVSNQ (85 aa). The region spanning 492 to 535 is the CAP-Gly 3 domain; sequence GQPPGLNEVLAGLELEDECAGCTDGTFRGTRYFTCALKKALFVK. Residues 592 to 950 enclose the USP domain; sequence KGIQGHYNSC…DAYMCMYQSP (359 aa). Cysteine 601 (nucleophile) is an active-site residue. Residues 781-833 form a B-box region; the sequence is LEDTPRQCRICGGLAMYECRECYDDPDISAGKIKQFCKTCNTQVHLHPKRLNH. Positions 788, 791, 799, 802, 817, 820, 825, and 833 each coordinate Zn(2+). Residue histidine 871 is the Proton acceptor of the active site.

This sequence belongs to the peptidase C19 family. In terms of assembly, interacts (via CAP-Gly domain) with IKBKG/NEMO (via proline-rich C-terminal region). Interacts with TRAF2 and TRIP. Interacts with PLK1, DVL1, DVL3, MAVS, TBK1, IKKE and RIGI. Interacts (via CAP-Gly domain) with microtubules. Interacts with HDAC6 and BCL3. Interacts with MAP3K7. Identified in a complex with TRAF6 and SQSTM1. Interacts with OPTN and SQSTM1. Interacts with CEP350. Interacts with RNF31; the interaction is indirect and is mediated via SPATA2. Interacts with SPATA2 (via the PUB domain); the interaction is direct and recruits CYLD to the LUBAC complex, thereby regulating TNF-alpha-induced necroptosis. Post-translationally, ubiquitinated. Polyubiquitinated in hepatocytes treated with palmitic acid. Ubiquitination is mediated by E3 ligase TRIM47 and leads to proteasomal degradation. In terms of processing, phosphorylated on several serine residues by IKKA and/or IKKB in response to immune stimuli. Phosphorylation requires IKBKG. Phosphorylation abolishes TRAF2 deubiquitination, interferes with the activation of Jun kinases, and strongly reduces CD40-dependent gene activation by NF-kappa-B. As to expression, detected in fetal brain, testis, and skeletal muscle, and at a lower level in adult brain, leukocytes, liver, heart, kidney, spleen, ovary and lung. Isoform 2 is found in all tissues except kidney.

The protein resides in the cytoplasm. The protein localises to the perinuclear region. It is found in the cytoskeleton. It localises to the cell membrane. Its subcellular location is the microtubule organizing center. The protein resides in the centrosome. The protein localises to the spindle. It is found in the cilium basal body. The enzyme catalyses Thiol-dependent hydrolysis of ester, thioester, amide, peptide and isopeptide bonds formed by the C-terminal Gly of ubiquitin (a 76-residue protein attached to proteins as an intracellular targeting signal).. Inhibited by phosphorylation at serine residues. In terms of biological role, deubiquitinase that specifically cleaves 'Lys-63'- and linear 'Met-1'-linked polyubiquitin chains and is involved in NF-kappa-B activation and TNF-alpha-induced necroptosis. Negatively regulates NF-kappa-B activation by deubiquitinating upstream signaling factors. Contributes to the regulation of cell survival, proliferation and differentiation via its effects on NF-kappa-B activation. Negative regulator of Wnt signaling. Inhibits HDAC6 and thereby promotes acetylation of alpha-tubulin and stabilization of microtubules. Plays a role in the regulation of microtubule dynamics, and thereby contributes to the regulation of cell proliferation, cell polarization, cell migration, and angiogenesis. Required for normal cell cycle progress and normal cytokinesis. Inhibits nuclear translocation of NF-kappa-B. Plays a role in the regulation of inflammation and the innate immune response, via its effects on NF-kappa-B activation. Dispensable for the maturation of intrathymic natural killer cells, but required for the continued survival of immature natural killer cells. Negatively regulates TNFRSF11A signaling and osteoclastogenesis. Involved in the regulation of ciliogenesis, allowing ciliary basal bodies to migrate and dock to the plasma membrane; this process does not depend on NF-kappa-B activation. Ability to remove linear ('Met-1'-linked) polyubiquitin chains regulates innate immunity and TNF-alpha-induced necroptosis: recruited to the LUBAC complex via interaction with SPATA2 and restricts linear polyubiquitin formation on target proteins. Regulates innate immunity by restricting linear polyubiquitin formation on RIPK2 in response to NOD2 stimulation. Involved in TNF-alpha-induced necroptosis by removing linear ('Met-1'-linked) polyubiquitin chains from RIPK1, thereby regulating the kinase activity of RIPK1. Negatively regulates intestinal inflammation by removing 'Lys-63' linked polyubiquitin chain of NLRP6, thereby reducing the interaction between NLRP6 and PYCARD/ASC and formation of the NLRP6 inflammasome. Does not catalyze deubiquitination of heterotypic 'Lys-63'-/'Lys-48'-linked branched ubiquitin chains. Removes 'Lys-63' linked polyubiquitin chain of MAP3K7, which inhibits phosphorylation and blocks downstream activation of the JNK-p38 kinase cascades. Also removes 'Lys-63'-linked polyubiquitin chains of MAP3K1 and MA3P3K3, which inhibit their interaction with MAP2K1 and MAP2K2. The protein is Ubiquitin carboxyl-terminal hydrolase CYLD of Homo sapiens (Human).